We begin with the raw amino-acid sequence, 247 residues long: 14-3-3 protein zeta (247 aa).

The protein belongs to the 14-3-3 family. Homodimer.

It localises to the cytoplasm. Functionally, adapter protein implicated in the regulation of a large spectrum of both general and specialized signaling pathways. Binds to a large number of partners, usually by recognition of a phosphoserine or phosphothreonine motif. Binding generally results in the modulation of the activity of the binding partner. This is 14-3-3 protein zeta (14-3-3zeta) from Bombyx mori (Silk moth).